Here is a 134-residue protein sequence, read N- to C-terminus: Large ribosomal subunit protein bL17 (134 aa).

Belongs to the bacterial ribosomal protein bL17 family. Part of the 50S ribosomal subunit. Contacts protein L32.

In Colwellia psychrerythraea (strain 34H / ATCC BAA-681) (Vibrio psychroerythus), this protein is Large ribosomal subunit protein bL17.